Here is an 806-residue protein sequence, read N- to C-terminus: Dimethyl sulfoxide reductase DmsA (806 aa).

The tat-type signal signal peptide spans Met-1–Ala-35. The 4Fe-4S Mo/W bis-MGD-type domain occupies Glu-47 to Asp-109. Residues Cys-54, Cys-58, Cys-62, and Cys-95 each coordinate [4Fe-4S] cluster. Residues Leu-163–Met-167, Ser-196, Glu-236–Thr-237, Ile-262–Asp-263, Gly-283–Asp-285, Trp-378–Gly-379, Arg-382, Asn-480, Ile-504–Asp-505, His-693, His-699–Thr-701, Asn-780, and Gln-796–His-797 each bind Mo-bis(molybdopterin guanine dinucleotide). Residues Arg-786–Leu-806 form a disordered region. A compositionally biased stretch (polar residues) spans Pro-795–Leu-806.

This sequence belongs to the prokaryotic molybdopterin-containing oxidoreductase family. Heterotrimeric enzyme composed of a catalytic heterodimer (DmsAB) and a membrane anchor protein (DmsC). It depends on [4Fe-4S] cluster as a cofactor. Requires Mo-bis(molybdopterin guanine dinucleotide) as cofactor. Predicted to be exported by the Tat system. The position of the signal peptide cleavage has not been experimentally proven.

The protein localises to the cell membrane. The catalysed reaction is dimethyl sulfide + a menaquinone + H2O = dimethyl sulfoxide + a menaquinol. Its function is as follows. Catalyzes the reduction of dimethyl sulfoxide (DMSO) to dimethyl sulfide (DMS). The terminal DMSO reductase can also use various sulfoxides and N-oxide compounds as terminal electron acceptor in addition to DMSO. The chain is Dimethyl sulfoxide reductase DmsA (dmsA) from Haemophilus influenzae (strain ATCC 51907 / DSM 11121 / KW20 / Rd).